The primary structure comprises 475 residues: tRNA-2-methylthio-N(6)-dimethylallyladenosine synthase (475 aa).

The span at 1-10 (MQETTVKRDG) shows a compositional bias: basic and acidic residues. Residues 1–22 (MQETTVKRDGASPSDAGTPATT) form a disordered region. An MTTase N-terminal domain is found at 27–144 (GKLYIRTFGC…LPDLIKRRRA (118 aa)). [4Fe-4S] cluster is bound by residues Cys36, Cys73, Cys107, Cys181, Cys185, and Cys188. The region spanning 167–400 (RVDGATAFVS…QALINQQAAA (234 aa)) is the Radical SAM core domain. One can recognise a TRAM domain in the interval 403 to 466 (QGMIGTRQRV…TNSLRGRVAG (64 aa)).

The protein belongs to the methylthiotransferase family. MiaB subfamily. Monomer. It depends on [4Fe-4S] cluster as a cofactor.

It is found in the cytoplasm. The enzyme catalyses N(6)-dimethylallyladenosine(37) in tRNA + (sulfur carrier)-SH + AH2 + 2 S-adenosyl-L-methionine = 2-methylsulfanyl-N(6)-dimethylallyladenosine(37) in tRNA + (sulfur carrier)-H + 5'-deoxyadenosine + L-methionine + A + S-adenosyl-L-homocysteine + 2 H(+). Its function is as follows. Catalyzes the methylthiolation of N6-(dimethylallyl)adenosine (i(6)A), leading to the formation of 2-methylthio-N6-(dimethylallyl)adenosine (ms(2)i(6)A) at position 37 in tRNAs that read codons beginning with uridine. This is tRNA-2-methylthio-N(6)-dimethylallyladenosine synthase from Bordetella parapertussis (strain 12822 / ATCC BAA-587 / NCTC 13253).